A 1262-amino-acid chain; its full sequence is Clustered mitochondria protein homolog (1262 aa).

The disordered stretch occupies residues 1 to 47 (MTSGSELKAEVDAPVVNGKDELVHEEDNNDSGHSSINTPDASEDKQT). Residues 31-40 (SGHSSINTPD) are compositionally biased toward polar residues. Residues 335-580 (AIELIEPFRV…RSMPPDVHYL (246 aa)) form the Clu domain.

This sequence belongs to the CLU family.

It is found in the cytoplasm. Functionally, mRNA-binding protein involved in proper cytoplasmic distribution of mitochondria. The sequence is that of Clustered mitochondria protein homolog from Caenorhabditis briggsae.